Reading from the N-terminus, the 108-residue chain is Urease subunit beta (108 aa).

This sequence belongs to the urease beta subunit family. In terms of assembly, heterotrimer of UreA (gamma), UreB (beta) and UreC (alpha) subunits. Three heterotrimers associate to form the active enzyme.

It is found in the cytoplasm. The catalysed reaction is urea + 2 H2O + H(+) = hydrogencarbonate + 2 NH4(+). Its pathway is nitrogen metabolism; urea degradation; CO(2) and NH(3) from urea (urease route): step 1/1. The polypeptide is Urease subunit beta (Trichormus variabilis (strain ATCC 29413 / PCC 7937) (Anabaena variabilis)).